A 957-amino-acid chain; its full sequence is MGEEKPEVLDAVLKEAVDLENIPIEEVFENLRCTKEGLTATAAQERLAIFGYNKLEEKKDSKLLKFLGFMWNPLSWVMEAAAIMAIALANGGGKPPDWQDFVGIITLLIINSTISFIEENNAGNAAAALMARLAPKAKVLRDGRWKEEDAAVLVPGDIISIKLGDIIPADARLLEGDPLKIDQSALTGESLPVTKGPGDGVYSGSTCKQGEIEAIVIATGVHTFFGKAAHLVDSTNQVGHFQKVLTAIGNFCICSIAVGMIIEIIVMYPIQHRAYRPGIDNLLVLLIGGIPIAMPTVLSVTMAIGSHRLAQQGAITKRMTAIEEMAGMDVLCSDKTGTLTLNKLTVDKNLIEVFAKGVDADMVVLMAARASRTENQDAIDAAIVGMLADPKEARAGIREIHFLPFNPTDKRTALTYLDGEGKMHRVSKGAPEQILNLAHNKSDIERRVHAVIDKFAERGLRSLGVAYQEVPEGRKESAGGPWQFIGLLPLFDPPRHDSAETIRRALNLGVNVKMVTGDQLAIGKETGRRLGMGTNMYPSSALLGQTKDESISALPIDELIEKADGFAGVFPEHKYEIVKRLQARKHICGMTGDGVNDAPALKKADIGIAVDDATDAARSASDIVLTEPGLSVIISAVLTSRAIFQRMKNYTIYAVSITIRIVLGFMLLALIWKFDFPPFMVLIIAILNDGTIMTISKDRVKPSPLPDSWKLAEIFTTGIVLGGYLAMMTVIFFWAAYKTNFFPHVFGVSTLEKTATDDFRKLASAIYLQVSIISQALIFVTRSRSWSFVERPGFLLVIAFVIAQLVATLIAVYANWSFAAIEGIGWGWAGVIWIYNLVFYIPLDIIKFFIRYALSGRAWDLVFERRIAFTRKKDFGKEQRELQWAHAQRTLHGLQVPDTKLFSEATNFNELNQLAEEAKRRAEIARLRELHTLKGHVESVVKLKGLDIETIQQAYTV.

Residues 1 to 66 (MGEEKPEVLD…EKKDSKLLKF (66 aa)) lie on the Cytoplasmic side of the membrane. A helical transmembrane segment spans residues 67–86 (LGFMWNPLSWVMEAAAIMAI). Residues 87-98 (ALANGGGKPPDW) are Extracellular-facing. Residues 99–119 (QDFVGIITLLIINSTISFIEE) traverse the membrane as a helical segment. Residues 120-248 (NNAGNAAAAL…GHFQKVLTAI (129 aa)) lie on the Cytoplasmic side of the membrane. The helical transmembrane segment at 249 to 269 (GNFCICSIAVGMIIEIIVMYP) threads the bilayer. At 270-279 (IQHRAYRPGI) the chain is on the extracellular side. Residues 280-301 (DNLLVLLIGGIPIAMPTVLSVT) form a helical membrane-spanning segment. Residues 302-648 (MAIGSHRLAQ…TSRAIFQRMK (347 aa)) lie on the Cytoplasmic side of the membrane. Aspartate 334 acts as the 4-aspartylphosphate intermediate in catalysis. The Mg(2+) site is built by aspartate 593 and aspartate 597. Residues 649-670 (NYTIYAVSITIRIVLGFMLLAL) traverse the membrane as a helical segment. Topologically, residues 671–675 (IWKFD) are extracellular. A helical transmembrane segment spans residues 676–698 (FPPFMVLIIAILNDGTIMTISKD). At 699–714 (RVKPSPLPDSWKLAEI) the chain is on the cytoplasmic side. Residues 715-735 (FTTGIVLGGYLAMMTVIFFWA) form a helical membrane-spanning segment. At 736-760 (AYKTNFFPHVFGVSTLEKTATDDFR) the chain is on the extracellular side. The chain crosses the membrane as a helical span at residues 761-781 (KLASAIYLQVSIISQALIFVT). Topologically, residues 782–793 (RSRSWSFVERPG) are cytoplasmic. Residues 794–814 (FLLVIAFVIAQLVATLIAVYA) form a helical membrane-spanning segment. At 815 to 823 (NWSFAAIEG) the chain is on the extracellular side. A helical transmembrane segment spans residues 824-844 (IGWGWAGVIWIYNLVFYIPLD). The Cytoplasmic portion of the chain corresponds to 845 to 957 (IIKFFIRYAL…IETIQQAYTV (113 aa)).

The protein belongs to the cation transport ATPase (P-type) (TC 3.A.3) family. Type IIIA subfamily. In terms of tissue distribution, expressed in roots, stems, leaves from both vegetative and flowering plants, and flowers at early and late stages of development with highest expression levels found in flowers and stem.

It is found in the cell membrane. It carries out the reaction ATP + H2O + H(+)(in) = ADP + phosphate + 2 H(+)(out). In terms of biological role, the plasma membrane ATPase of plants and fungi is a hydrogen ion pump. The proton gradient it generates drives the active transport of nutrients by H(+)-symport. The resulting external acidification and/or internal alkinization may mediate growth responses. The chain is Plasma membrane ATPase 1 (PMA1) from Nicotiana plumbaginifolia (Leadwort-leaved tobacco).